We begin with the raw amino-acid sequence, 407 residues long: Protein ZNF365 (407 aa).

Phosphoserine is present on Ser16. The C2H2-type; degenerate zinc finger occupies 26 to 51; it reads FRCPRCGDHTRFRSLSSLRAHLEFSH. Residue Ser138 is modified to Phosphoserine. Residues 169 to 296 adopt a coiled-coil conformation; it reads VEAVDRTIEK…KQLEYYQSQQ (128 aa). Residue Thr175 is modified to Phosphothreonine. The interval 347–392 is disordered; the sequence is LKKAKDDRASMQPAKAIHEQAESSRDLCRPPKKGELLGFGRKGNIR. The span at 362–381 shows a compositional bias: basic and acidic residues; it reads AIHEQAESSRDLCRPPKKGE. Ser369 bears the Phosphoserine mark.

In terms of assembly, homodimers. Interacts with NDE1 and NDEL1. Interacts with DISC1. Interacts with PARP1. Interacts with MCRS1.

Its subcellular location is the cytoplasm. It localises to the cytoskeleton. It is found in the microtubule organizing center. The protein resides in the centrosome. Involved in the regulation of neurogenesis. Negatively regulates neurite outgrowth. Involved in the morphogenesis of basket cells in the somatosensory cortex during embryogenesis. Involved in the positive regulation of oligodendrocyte differentiation during postnatal growth. Involved in dendritic arborization, morphogenesis of spine density dendrite, and establishment of postsynaptic dendrite density in cortical pyramidal neurons. Involved in homologous recombination (HR) repair pathway. Required for proper resolution of DNA double-strand breaks (DSBs) by HR. Is required for recovery of stalled replication forks, and directly contributes to genomic stability. Interacts with PARP1 and mediates MRE11-dependent DNA end resection during replication fork recovery. Contributes to genomic stability by preventing telomere dysfunction. The chain is Protein ZNF365 (ZNF365) from Pongo abelii (Sumatran orangutan).